A 181-amino-acid chain; its full sequence is ATP synthase subunit delta (181 aa).

The protein belongs to the ATPase delta chain family. As to quaternary structure, F-type ATPases have 2 components, F(1) - the catalytic core - and F(0) - the membrane proton channel. F(1) has five subunits: alpha(3), beta(3), gamma(1), delta(1), epsilon(1). F(0) has three main subunits: a(1), b(2) and c(10-14). The alpha and beta chains form an alternating ring which encloses part of the gamma chain. F(1) is attached to F(0) by a central stalk formed by the gamma and epsilon chains, while a peripheral stalk is formed by the delta and b chains.

Its subcellular location is the cell membrane. F(1)F(0) ATP synthase produces ATP from ADP in the presence of a proton or sodium gradient. F-type ATPases consist of two structural domains, F(1) containing the extramembraneous catalytic core and F(0) containing the membrane proton channel, linked together by a central stalk and a peripheral stalk. During catalysis, ATP synthesis in the catalytic domain of F(1) is coupled via a rotary mechanism of the central stalk subunits to proton translocation. Its function is as follows. This protein is part of the stalk that links CF(0) to CF(1). It either transmits conformational changes from CF(0) to CF(1) or is implicated in proton conduction. The protein is ATP synthase subunit delta of Shouchella clausii (strain KSM-K16) (Alkalihalobacillus clausii).